Consider the following 425-residue polypeptide: Enolase (425 aa).

Residue Q162 participates in (2R)-2-phosphoglycerate binding. The Proton donor role is filled by E204. D241, E284, and D311 together coordinate Mg(2+). (2R)-2-phosphoglycerate-binding residues include K336, R365, S366, and K387. K336 functions as the Proton acceptor in the catalytic mechanism.

It belongs to the enolase family. Requires Mg(2+) as cofactor.

The protein localises to the cytoplasm. It localises to the secreted. Its subcellular location is the cell surface. It catalyses the reaction (2R)-2-phosphoglycerate = phosphoenolpyruvate + H2O. The protein operates within carbohydrate degradation; glycolysis; pyruvate from D-glyceraldehyde 3-phosphate: step 4/5. Its function is as follows. Catalyzes the reversible conversion of 2-phosphoglycerate (2-PG) into phosphoenolpyruvate (PEP). It is essential for the degradation of carbohydrates via glycolysis. The protein is Enolase of Brucella melitensis biotype 2 (strain ATCC 23457).